The chain runs to 199 residues: Recombination protein RecR (199 aa).

Residues 58–73 form a C4-type zinc finger; that stretch reads CVNCGNIGTGDLCEIC. Positions 81–176 constitute a Toprim domain; that stretch reads GEICVVEDVA…TLSSLAQGVP (96 aa).

The protein belongs to the RecR family.

In terms of biological role, may play a role in DNA repair. It seems to be involved in an RecBC-independent recombinational process of DNA repair. It may act with RecF and RecO. In Jannaschia sp. (strain CCS1), this protein is Recombination protein RecR.